A 255-amino-acid chain; its full sequence is D-aminoacyl-tRNA deacylase (255 aa).

This sequence belongs to the DtdA deacylase family. In terms of assembly, monomer. It depends on Zn(2+) as a cofactor.

The catalysed reaction is a D-aminoacyl-tRNA + H2O = a tRNA + a D-alpha-amino acid + H(+). It catalyses the reaction glycyl-tRNA(Ala) + H2O = tRNA(Ala) + glycine + H(+). Its function is as follows. D-aminoacyl-tRNA deacylase with broad substrate specificity. By recycling D-aminoacyl-tRNA to D-amino acids and free tRNA molecules, this enzyme counteracts the toxicity associated with the formation of D-aminoacyl-tRNA entities in vivo. The polypeptide is D-aminoacyl-tRNA deacylase (Methanocaldococcus jannaschii (strain ATCC 43067 / DSM 2661 / JAL-1 / JCM 10045 / NBRC 100440) (Methanococcus jannaschii)).